We begin with the raw amino-acid sequence, 433 residues long: 23S rRNA (uracil(1939)-C(5))-methyltransferase RlmD (433 aa).

Positions 10–68 (RTTTRQIITVSVNDLDSFGQGVARHNGKTLFIPGLLPQENAEVAVTEDKKQYARAKVVR) constitute a TRAM domain. Residues Cys-81, Cys-87, Cys-90, and Cys-162 each contribute to the [4Fe-4S] cluster site. The S-adenosyl-L-methionine site is built by Gln-265, Phe-294, Asn-299, Glu-315, Asn-342, and Asp-363. Cys-389 acts as the Nucleophile in catalysis.

It belongs to the class I-like SAM-binding methyltransferase superfamily. RNA M5U methyltransferase family. RlmD subfamily.

It carries out the reaction uridine(1939) in 23S rRNA + S-adenosyl-L-methionine = 5-methyluridine(1939) in 23S rRNA + S-adenosyl-L-homocysteine + H(+). In terms of biological role, catalyzes the formation of 5-methyl-uridine at position 1939 (m5U1939) in 23S rRNA. The sequence is that of 23S rRNA (uracil(1939)-C(5))-methyltransferase RlmD from Shigella flexneri serotype 5b (strain 8401).